Reading from the N-terminus, the 442-residue chain is GTPase Der (442 aa).

2 EngA-type G domains span residues 2–167 and 175–351; these read RTIA…PIQN and FKFC…EQAM. Residues 8 to 15, 55 to 59, 119 to 122, 181 to 188, 228 to 232, and 293 to 296 each bind GTP; these read GKPNVGKS, DTGGI, NKVE, GRPNVGKS, DTAGV, and NKWD. A KH-like domain is found at 352–436; that stretch reads RKVATSLLND…PITLYWQDKN (85 aa).

Belongs to the TRAFAC class TrmE-Era-EngA-EngB-Septin-like GTPase superfamily. EngA (Der) GTPase family. In terms of assembly, associates with the 50S ribosomal subunit.

Functionally, GTPase that plays an essential role in the late steps of ribosome biogenesis. The sequence is that of GTPase Der from Ureaplasma urealyticum serovar 10 (strain ATCC 33699 / Western).